A 1108-amino-acid polypeptide reads, in one-letter code: Topless-related protein 3 (1108 aa).

Positions 4 to 36 (LSRELVFLILQFLEEEKFKESVHRLEKESGFFF) constitute a LisH domain. A CTLH domain is found at 34 to 92 (FFFNTKYFDEKVLAGEWDDVETYLSGFTKVDDNRYSMKIFFEIRKQKYLEALDRQEKAK). S214 is modified (phosphoserine). WD repeat units follow at residues 343-383 (HQGS…RLVS), 405-444 (ETPI…DLRQ), 450-491 (AHVG…HFTF), 493-534 (GHDA…SRVD), 583-623 (EFQK…VLTS), and 628-667 (GGLP…RSLR). Residues 706–725 (HSQMLNGVDPSKSRIDDSTD) form a disordered region. The segment covering 716 to 725 (SKSRIDDSTD) has biased composition (basic and acidic residues). WD repeat units follow at residues 751 to 790 (GSST…QNPS), 818 to 856 (NLEN…VMTT), 859 to 899 (PPPP…VKSK), 902 to 941 (GHQK…KRKS), and 994 to 1033 (SLSA…LRCR). The tract at residues 1084 to 1108 (GMIPPSEAINSPSTTSNQTPEQLQR) is disordered. Positions 1091-1108 (AINSPSTTSNQTPEQLQR) are enriched in polar residues.

Tetramer. Interacts with NINJA/AFPH2. Interacts with SMXL6. Interacts with SPL (via EAR motif). Interacts with SPEAR3/TIE1.

The protein resides in the nucleus. Its function is as follows. Transcriptional corepressor. Negative regulator of jasmonate responses. The polypeptide is Topless-related protein 3 (TPR3) (Arabidopsis thaliana (Mouse-ear cress)).